A 159-amino-acid chain; its full sequence is MSKVKKKSTSTGTIALNKRAKYDYFVDQKFEAGLVLSGWEVKSLREGKAQLVDAFVIIHQNEAWLVGARITPLLSASTHVVCEPMRQRKLLLNRKELERIIQVTEQKGKTCAAMALYWKGNKIKCEVALVTGKKEHDKRDTERDRDWSRDKERLMKHNA.

Positions lysine 134 to alanine 159 are disordered.

It belongs to the SmpB family.

It is found in the cytoplasm. In terms of biological role, required for rescue of stalled ribosomes mediated by trans-translation. Binds to transfer-messenger RNA (tmRNA), required for stable association of tmRNA with ribosomes. tmRNA and SmpB together mimic tRNA shape, replacing the anticodon stem-loop with SmpB. tmRNA is encoded by the ssrA gene; the 2 termini fold to resemble tRNA(Ala) and it encodes a 'tag peptide', a short internal open reading frame. During trans-translation Ala-aminoacylated tmRNA acts like a tRNA, entering the A-site of stalled ribosomes, displacing the stalled mRNA. The ribosome then switches to translate the ORF on the tmRNA; the nascent peptide is terminated with the 'tag peptide' encoded by the tmRNA and targeted for degradation. The ribosome is freed to recommence translation, which seems to be the essential function of trans-translation. This chain is SsrA-binding protein, found in Marinomonas sp. (strain MWYL1).